The primary structure comprises 632 residues: Probable potassium transport system protein Kup (632 aa).

12 helical membrane passes run 17 to 37, 60 to 80, 106 to 126, 146 to 166, 175 to 195, 210 to 230, 254 to 274, 292 to 312, 344 to 364, 370 to 390, 401 to 421, and 426 to 446; these read LFYL…TSPL, LISL…VLFL, TAIL…DAMI, LSEY…VVQS, FFGP…ISHI, AVSF…AVFL, WFLL…ALVL, ALLP…QAVI, IFVP…VLSF, LATA…IMAF, LPVA…FLGA, and IHDG…IMWT.

The protein belongs to the HAK/KUP transporter (TC 2.A.72) family.

Its subcellular location is the cell inner membrane. It catalyses the reaction K(+)(in) + H(+)(in) = K(+)(out) + H(+)(out). Transport of potassium into the cell. Likely operates as a K(+):H(+) symporter. The sequence is that of Probable potassium transport system protein Kup from Rhizobium rhizogenes (Agrobacterium rhizogenes).